A 214-amino-acid polypeptide reads, in one-letter code: Probable transaldolase (214 aa).

Lys83 acts as the Schiff-base intermediate with substrate in catalysis.

It belongs to the transaldolase family. Type 3B subfamily.

The protein resides in the cytoplasm. The enzyme catalyses D-sedoheptulose 7-phosphate + D-glyceraldehyde 3-phosphate = D-erythrose 4-phosphate + beta-D-fructose 6-phosphate. The protein operates within carbohydrate degradation; pentose phosphate pathway; D-glyceraldehyde 3-phosphate and beta-D-fructose 6-phosphate from D-ribose 5-phosphate and D-xylulose 5-phosphate (non-oxidative stage): step 2/3. In terms of biological role, transaldolase is important for the balance of metabolites in the pentose-phosphate pathway. The sequence is that of Probable transaldolase from Streptococcus equi subsp. zooepidemicus (strain H70).